A 94-amino-acid chain; its full sequence is Co-chaperonin GroES (94 aa).

This sequence belongs to the GroES chaperonin family. As to quaternary structure, heptamer of 7 subunits arranged in a ring. Interacts with the chaperonin GroEL.

It localises to the cytoplasm. Together with the chaperonin GroEL, plays an essential role in assisting protein folding. The GroEL-GroES system forms a nano-cage that allows encapsulation of the non-native substrate proteins and provides a physical environment optimized to promote and accelerate protein folding. GroES binds to the apical surface of the GroEL ring, thereby capping the opening of the GroEL channel. The sequence is that of Co-chaperonin GroES from Bacillus mycoides (strain KBAB4) (Bacillus weihenstephanensis).